The primary structure comprises 944 residues: Isoleucine--tRNA ligase (944 aa).

Residues Pro58–His68 carry the 'HIGH' region motif. Residue Glu563 participates in L-isoleucyl-5'-AMP binding. The 'KMSKS' region signature appears at Lys604–Ser608. Residue Lys607 participates in ATP binding. Zn(2+)-binding residues include Cys907, Cys910, Cys927, and Cys930.

It belongs to the class-I aminoacyl-tRNA synthetase family. IleS type 1 subfamily. In terms of assembly, monomer. The cofactor is Zn(2+).

The protein localises to the cytoplasm. The catalysed reaction is tRNA(Ile) + L-isoleucine + ATP = L-isoleucyl-tRNA(Ile) + AMP + diphosphate. Its function is as follows. Catalyzes the attachment of isoleucine to tRNA(Ile). As IleRS can inadvertently accommodate and process structurally similar amino acids such as valine, to avoid such errors it has two additional distinct tRNA(Ile)-dependent editing activities. One activity is designated as 'pretransfer' editing and involves the hydrolysis of activated Val-AMP. The other activity is designated 'posttransfer' editing and involves deacylation of mischarged Val-tRNA(Ile). The polypeptide is Isoleucine--tRNA ligase (Salmonella choleraesuis (strain SC-B67)).